Here is a 218-residue protein sequence, read N- to C-terminus: Small ribosomal subunit protein uS3c (218 aa).

The KH type-2 domain occupies Ile43 to Ala118.

Belongs to the universal ribosomal protein uS3 family. In terms of assembly, part of the 30S ribosomal subunit.

It localises to the plastid. Its subcellular location is the chloroplast. In Coffea arabica (Arabian coffee), this protein is Small ribosomal subunit protein uS3c (rps3).